A 312-amino-acid polypeptide reads, in one-letter code: Zinc finger protein-like 1 (312 aa).

The segment at 1-43 (MGLCKCPKRKVTNLFCFEHRVNVCEHCLVANHAKCIVQSYLQW) adopts a B box-type; degenerate zinc-finger fold. Over 1–268 (MGLCKCPKRK…RPLTLLQRAG (268 aa)) the chain is Cytoplasmic. Residues 53–101 (CRLCNIPLAARETTRLICYDLFHWACLNERAAQLPRNTAPAGYQCPSCS) form an RING-type; degenerate zinc finger. Residues 144-233 (EPEPLNTSEF…RAPGLHRDCD (90 aa)) are disordered. Over residues 148-173 (LNTSEFSDWSSFNASGSPEQEETASA) the composition is skewed to polar residues. Residues 215-233 (KVYDTRDDERAPGLHRDCD) show a composition bias toward basic and acidic residues. Residues 269-289 (LLLLLGLLGFLALLALMSRLG) form a helical membrane-spanning segment. Residues 290–312 (RAAADSDPNLDPLMNPHIRVGPS) are Lumenal-facing.

It belongs to the ZFPL1 family. As to quaternary structure, interacts with GOLGA2/GM130. Post-translationally, phosphorylated.

The protein resides in the golgi apparatus. It is found in the cis-Golgi network membrane. In terms of biological role, required for cis-Golgi integrity and efficient ER to Golgi transport. Involved in the maintenance of the integrity of the cis-Golgi, possibly via its interaction with GOLGA2/GM130. The protein is Zinc finger protein-like 1 (ZFPL1) of Bos taurus (Bovine).